A 452-amino-acid chain; its full sequence is MGLRDSLKEREDRRSSEEEGDARQSWMTRESTTGWRKESTAALGTPVADWQCVLLLQFGALQQKLLKAFPRAGPRPTTTLVPARPERARKKPHSQPPPSTHMALQAQATASPSPSPSPTRGRTGSGEWPDDAEKLPIAATASPARSSDAVELVVVASTRHAAAAKYVPRRSTSHTADPNPGRGGGGGSAGWYSWNGGRTRTAAPPRHARADPPPAPPRRQQPVEAPPPPPPPPPPPAPAPALPPPVPPSPPAPAQAPVPPSATAPAPAPVPAPRASSPHVQFRSADQVVPNILSRKRRAAAMQRTALLARGAAAGLCLAALAVLAADTRKGWARDSYSNYTQFRYSEAVNVIGFIYSVFQFVALVELMRRNKHLIPHPKRDLFDFTMDQVLTYLLISSSSSATARVSDLIDNWGSDPFPSMANGSIAISFLAFAVFAICSLISAYNLFRRDV.

A compositionally biased stretch (basic and acidic residues) spans 1–17 (MGLRDSLKEREDRRSSE). Disordered regions lie at residues 1 to 39 (MGLR…RKES), 71 to 147 (RAGP…ARSS), and 164 to 283 (AKYV…VQFR). Over 1–305 (MGLRDSLKER…KRRAAAMQRT (305 aa)) the chain is Cytoplasmic. The segment covering 25–34 (SWMTRESTTG) has biased composition (polar residues). 2 stretches are compositionally biased toward low complexity: residues 105–126 (QAQA…TGSG) and 190–205 (GWYS…AAPP). Over residues 211 to 272 (DPPPAPPRRQ…TAPAPAPVPA (62 aa)) the composition is skewed to pro residues. The helical transmembrane segment at 306 to 326 (ALLARGAAAGLCLAALAVLAA) threads the bilayer. Residues 327–347 (DTRKGWARDSYSNYTQFRYSE) lie on the Extracellular side of the membrane. Residue N339 is glycosylated (N-linked (GlcNAc...) asparagine). A helical transmembrane segment spans residues 348 to 368 (AVNVIGFIYSVFQFVALVELM). The Cytoplasmic segment spans residues 369–389 (RRNKHLIPHPKRDLFDFTMDQ). Residues 390–406 (VLTYLLISSSSSATARV) form a helical membrane-spanning segment. The Extracellular portion of the chain corresponds to 407-423 (SDLIDNWGSDPFPSMAN). An N-linked (GlcNAc...) asparagine glycan is attached at N423. A helical transmembrane segment spans residues 424-444 (GSIAISFLAFAVFAICSLISA). Residues 445–452 (YNLFRRDV) are Cytoplasmic-facing.

The protein belongs to the Casparian strip membrane proteins (CASP) family. As to quaternary structure, homodimer and heterodimers.

The protein resides in the cell membrane. In Sorghum bicolor (Sorghum), this protein is CASP-like protein 4A1.